The primary structure comprises 125 residues: Fluoride-specific ion channel FluC (125 aa).

A run of 4 helical transmembrane segments spans residues 1–21 (MIQA…RYYV), 32–52 (AFPW…GVFA), 68–88 (LLIT…LDAI), and 101–121 (IYIA…LAVM). Residues Gly-75 and Thr-78 each contribute to the Na(+) site.

The protein belongs to the fluoride channel Fluc/FEX (TC 1.A.43) family.

It is found in the cell inner membrane. It carries out the reaction fluoride(in) = fluoride(out). With respect to regulation, na(+) is not transported, but it plays an essential structural role and its presence is essential for fluoride channel function. Its function is as follows. Fluoride-specific ion channel. Important for reducing fluoride concentration in the cell, thus reducing its toxicity. The chain is Fluoride-specific ion channel FluC from Rhizobium etli (strain CIAT 652).